Reading from the N-terminus, the 320-residue chain is Bifunctional protein FolD 2 (320 aa).

NADP(+) is bound by residues 173–175 (GRS) and isoleucine 242.

It belongs to the tetrahydrofolate dehydrogenase/cyclohydrolase family. Homodimer.

The catalysed reaction is (6R)-5,10-methylene-5,6,7,8-tetrahydrofolate + NADP(+) = (6R)-5,10-methenyltetrahydrofolate + NADPH. The enzyme catalyses (6R)-5,10-methenyltetrahydrofolate + H2O = (6R)-10-formyltetrahydrofolate + H(+). It participates in one-carbon metabolism; tetrahydrofolate interconversion. Its function is as follows. Catalyzes the oxidation of 5,10-methylenetetrahydrofolate to 5,10-methenyltetrahydrofolate and then the hydrolysis of 5,10-methenyltetrahydrofolate to 10-formyltetrahydrofolate. The protein is Bifunctional protein FolD 2 of Rubrobacter xylanophilus (strain DSM 9941 / JCM 11954 / NBRC 16129 / PRD-1).